A 433-amino-acid polypeptide reads, in one-letter code: Pyroglutamylated RF-amide peptide receptor (433 aa).

The Extracellular segment spans residues 1–46 (MQALNITAEQFSRLLSAHNLTREQFIHRYGLRPLVYTPELPARAKV). N-linked (GlcNAc...) asparagine glycans are attached at residues Asn-5 and Asn-19. Residues 47 to 67 (AFALAGALIFALALFGNSLVI) traverse the membrane as a helical segment. At 68 to 81 (YVVTRSKAMRTVTN) the chain is on the cytoplasmic side. Residues 82-102 (IFICSLALSDLLIAFFCIPVT) traverse the membrane as a helical segment. The Extracellular portion of the chain corresponds to 103-120 (MLQNISDKWLGGAFICKM). The chain crosses the membrane as a helical span at residues 121 to 141 (VPFVQSTAVVTEILTMTCIAV). Over 142-162 (ERHQGLVHPFKMKWQYTTRRA) the chain is Cytoplasmic. The helical transmembrane segment at 163–183 (FTILGVVWLAAIIVGSPMWHV) threads the bilayer. At 184-212 (QRLEIKYDFLYEKEHICCLEEWASPVHQR) the chain is on the extracellular side. The chain crosses the membrane as a helical span at residues 213–233 (IYSTFILVILFLLPLVVMLVL). Topologically, residues 234-271 (YSKIGYELWIKKRVGDSSALQTIHGKEMSKIARKKKRA) are cytoplasmic. A helical membrane pass occupies residues 272 to 292 (VIMMVTVVALFAACWAPFHVV). Over 293-313 (HMMVEYSNFEKEYDDVTIKMV) the chain is Extracellular. Residues 314 to 334 (FAVAQTIGFFNSICNPFVYAF) form a helical membrane-spanning segment. The Cytoplasmic segment spans residues 335-433 (MNENFKKNFL…NSTFGSGHEL (99 aa)). The tract at residues 356 to 389 (SSPARKPGNSGISMMQKRAKLSRPQRPVEETKGD) is disordered.

It belongs to the G-protein coupled receptor 1 family. Highly expressed in the adrenal gland and at moderate levels in the eye and testis. Expressed widely in the brain with high levels in the hypothalamus and moderate levels in the amygdala, basal forebrain, cortex, medulla oblongata, midbrain and thalamus.

It is found in the cell membrane. Functionally, receptor for the orexigenic neuropeptide QRFP. The activity of this receptor is mediated by G proteins that modulate adenylate cyclase activity and intracellular calcium levels. The sequence is that of Pyroglutamylated RF-amide peptide receptor (Qrfpr) from Rattus norvegicus (Rat).